Consider the following 399-residue polypeptide: Coiled-coil domain-containing protein 85C-B (399 aa).

2 coiled-coil regions span residues 52-84 and 113-144; these read NRSL…ELCC and KEVS…DIIL. A disordered region spans residues 151-199; sequence NGAGSRSSIDSQSSLSNLNGGSGTVRDVGDGSSTSSGGSAGSPDHHHNH. Positions 155 to 169 are enriched in low complexity; the sequence is SRSSIDSQSSLSNLN.

The protein belongs to the CCDC85 family.

It is found in the cell junction. Its subcellular location is the tight junction. The protein resides in the adherens junction. May play a role in cell-cell adhesion and epithelium development through its interaction with proteins of the beta-catenin family. May play an important role in cortical development, especially in the maintenance of radial glia. The protein is Coiled-coil domain-containing protein 85C-B (ccdc85cb) of Danio rerio (Zebrafish).